A 606-amino-acid polypeptide reads, in one-letter code: Transmembrane 9 superfamily member 1 (606 aa).

The N-terminal stretch at 1–27 (MTVVGNPRSWSCRWLPILILLLGTGHG) is a signal peptide. Asn178 carries an N-linked (GlcNAc...) asparagine glycan. The next 4 helical transmembrane spans lie at 237–257 (LSIINSMVLVFLLVGFVAVIL), 310–330 (VLGVGAQFLALGTGIIVMALL), 339–359 (GAINSAAILLYALTCCISGYV), and 373–393 (VWNIILTTSLFSVPFFLTWSV). Asn401 carries an N-linked (GlcNAc...) asparagine glycan. 4 helical membrane-spanning segments follow: residues 412-432 (ILLLLTVWLLVGFPLTVIGGI), 469-489 (VGGFLPFSAISVELYYIFATV), 499-519 (GILFFVFAILLSVGACISIAL), and 535-555 (SVLSVGSTGLFIFLYSVFYYA). Asn559 carries an N-linked (GlcNAc...) asparagine glycan. The helical transmembrane segment at 570–590 (FGYSLLTGYVFFLMLGTISFF) threads the bilayer.

Belongs to the nonaspanin (TM9SF) (TC 9.A.2) family.

The protein resides in the lysosome membrane. Its subcellular location is the cytoplasmic vesicle. The protein localises to the autophagosome membrane. Plays an essential role in autophagy. This is Transmembrane 9 superfamily member 1 (TM9SF1) from Pongo abelii (Sumatran orangutan).